The chain runs to 176 residues: Large ribosomal subunit protein uL10 (176 aa).

It belongs to the universal ribosomal protein uL10 family. As to quaternary structure, part of the ribosomal stalk of the 50S ribosomal subunit. The N-terminus interacts with L11 and the large rRNA to form the base of the stalk. The C-terminus forms an elongated spine to which L12 dimers bind in a sequential fashion forming a multimeric L10(L12)X complex.

Forms part of the ribosomal stalk, playing a central role in the interaction of the ribosome with GTP-bound translation factors. The protein is Large ribosomal subunit protein uL10 of Sorangium cellulosum (strain So ce56) (Polyangium cellulosum (strain So ce56)).